The following is an 87-amino-acid chain: MTALFYLLFLTSVIIETHQECDMEKLDGDFPRQNNGYLYVCKDVETCFHICEERDLNRNHAKCCYENCFCEHLHGEKIRKQNVSLKI.

Residues Met-1–Gln-19 form the signal peptide. 3 disulfides stabilise this stretch: Cys-41/Cys-63, Cys-47/Cys-68, and Cys-51/Cys-70.

It belongs to the long (4 C-C) scorpion toxin superfamily. Sodium channel inhibitor family. In terms of tissue distribution, expressed by the venom gland.

The protein resides in the secreted. Functionally, putative sodium channel toxin. This chain is Putative sodium channel toxin Ts40, found in Tityus serrulatus (Brazilian scorpion).